The following is a 110-amino-acid chain: MTGLVGGGLMIIAGILIKLFPPKSINSVYGYRTRRSMSDQRLWNEANRYSASLMILSGLVIAGMGLLLGSNLFILQLILLIAACVITFMLTEKRLKIMTHSQGGDRSGRS.

3 helical membrane-spanning segments follow: residues 4 to 26 (LVGG…KSIN), 46 to 68 (ANRY…GLLL), and 72 to 91 (LFIL…FMLT).

It localises to the cell membrane. This is an uncharacterized protein from Bacillus subtilis (strain 168).